Consider the following 251-residue polypeptide: 4-hydroxy-tetrahydrodipicolinate reductase (251 aa).

Residues 8-13, 76-78, and 106-109 contribute to the NAD(+) site; these read GAKGRM, GTT, and APNF. The Proton donor/acceptor role is filled by His-136. Residue His-137 participates in (S)-2,3,4,5-tetrahydrodipicolinate binding. Residue Lys-140 is the Proton donor of the active site. Residue 146 to 147 participates in (S)-2,3,4,5-tetrahydrodipicolinate binding; sequence GT.

This sequence belongs to the DapB family.

The protein localises to the cytoplasm. It catalyses the reaction (S)-2,3,4,5-tetrahydrodipicolinate + NAD(+) + H2O = (2S,4S)-4-hydroxy-2,3,4,5-tetrahydrodipicolinate + NADH + H(+). It carries out the reaction (S)-2,3,4,5-tetrahydrodipicolinate + NADP(+) + H2O = (2S,4S)-4-hydroxy-2,3,4,5-tetrahydrodipicolinate + NADPH + H(+). Its pathway is amino-acid biosynthesis; L-lysine biosynthesis via DAP pathway; (S)-tetrahydrodipicolinate from L-aspartate: step 4/4. Catalyzes the conversion of 4-hydroxy-tetrahydrodipicolinate (HTPA) to tetrahydrodipicolinate. This is 4-hydroxy-tetrahydrodipicolinate reductase from Bifidobacterium longum subsp. infantis (strain ATCC 15697 / DSM 20088 / JCM 1222 / NCTC 11817 / S12).